The chain runs to 412 residues: Zinc finger protein 821 (412 aa).

The tract at residues 26–83 (RQAMMKTDFPGDLGSQRQAIQQLRDQDSSSSDSEGDEEETTQDEVSSHTSEEDGGVVK) is disordered. Residues 58 to 67 (SEGDEEETTQ) show a composition bias toward acidic residues. C2H2-type zinc fingers lie at residues 116-140 (GLCQ…VYQH) and 150-172 (YMCP…LLIH). A coiled-coil region spans residues 257 to 366 (KWALRRQNEP…EKMDMMLRAQ (110 aa)). The tract at residues 278–319 (RTAKKSRRDNETPEEREVRRMRDREAKRLQRMQETDEQRARR) is disordered.

This sequence belongs to the krueppel C2H2-type zinc-finger protein family.

The protein resides in the nucleus. May be involved in transcriptional regulation. The sequence is that of Zinc finger protein 821 (ZNF821) from Bos taurus (Bovine).